The chain runs to 278 residues: Release factor glutamine methyltransferase (278 aa).

S-adenosyl-L-methionine contacts are provided by residues 117–121 (GTGSG), D140, and N184. Position 184-187 (184-187 (NPPY)) interacts with substrate.

Belongs to the protein N5-glutamine methyltransferase family. PrmC subfamily.

The catalysed reaction is L-glutaminyl-[peptide chain release factor] + S-adenosyl-L-methionine = N(5)-methyl-L-glutaminyl-[peptide chain release factor] + S-adenosyl-L-homocysteine + H(+). Functionally, methylates the class 1 translation termination release factors RF1/PrfA and RF2/PrfB on the glutamine residue of the universally conserved GGQ motif. The sequence is that of Release factor glutamine methyltransferase from Bacteroides thetaiotaomicron (strain ATCC 29148 / DSM 2079 / JCM 5827 / CCUG 10774 / NCTC 10582 / VPI-5482 / E50).